A 225-amino-acid polypeptide reads, in one-letter code: Glutathione S-transferase U3 (225 aa).

Positions 6 to 86 constitute a GST N-terminal domain; it reads EGVKLIGSWA…YIDQTWTNNP (81 aa). Residues 16 to 17, 43 to 44, 57 to 58, and 70 to 71 contribute to the glutathione site; these read SP, VK, KV, and ES. A GST C-terminal domain is found at 91-218; it reads SPYDKAMARF…EKHIEHMMKI (128 aa). Position 152 is a phosphothreonine (Thr152).

The protein belongs to the GST superfamily. Tau family.

It is found in the cytoplasm. The protein localises to the cytosol. It carries out the reaction RX + glutathione = an S-substituted glutathione + a halide anion + H(+). Functionally, may be involved in the conjugation of reduced glutathione to a wide number of exogenous and endogenous hydrophobic electrophiles and have a detoxification role against certain herbicides. This chain is Glutathione S-transferase U3 (GSTU3), found in Arabidopsis thaliana (Mouse-ear cress).